Reading from the N-terminus, the 198-residue chain is dTTP/UTP pyrophosphatase (198 aa).

The Proton acceptor role is filled by D69.

This sequence belongs to the Maf family. YhdE subfamily. A divalent metal cation serves as cofactor.

It is found in the cytoplasm. It catalyses the reaction dTTP + H2O = dTMP + diphosphate + H(+). The catalysed reaction is UTP + H2O = UMP + diphosphate + H(+). In terms of biological role, nucleoside triphosphate pyrophosphatase that hydrolyzes dTTP and UTP. May have a dual role in cell division arrest and in preventing the incorporation of modified nucleotides into cellular nucleic acids. The chain is dTTP/UTP pyrophosphatase from Idiomarina loihiensis (strain ATCC BAA-735 / DSM 15497 / L2-TR).